The sequence spans 261 residues: Small ribosomal subunit protein eS1 (261 aa).

Basic residues predominate over residues 1-18; sequence MAVGKNKRISKGKKGGKK. Residues 1 to 20 form a disordered region; that stretch reads MAVGKNKRISKGKKGGKKKA.

This sequence belongs to the eukaryotic ribosomal protein eS1 family. As to quaternary structure, component of the small ribosomal subunit. Mature ribosomes consist of a small (40S) and a large (60S) subunit. The 40S subunit contains about 33 different proteins and 1 molecule of RNA (18S). The 60S subunit contains about 49 different proteins and 3 molecules of RNA (25S, 5.8S and 5S).

It localises to the cytoplasm. This chain is Small ribosomal subunit protein eS1, found in Catharanthus roseus (Madagascar periwinkle).